Consider the following 346-residue polypeptide: Glucose-6-phosphatase 3 (346 aa).

Residues Met1–Asn24 lie on the Lumenal side of the membrane. Residues Val25–Ala45 form a helical membrane-spanning segment. At Ala46–Gly54 the chain is on the cytoplasmic side. Residues Ile55 to Leu75 traverse the membrane as a helical segment. Residues Phe76–His114 lie on the Lumenal side of the membrane. Arg79 lines the substrate pocket. His114 (proton donor) is an active-site residue. A helical membrane pass occupies residues Cys115–Thr135. Over Arg136–Pro146 the chain is Cytoplasmic. A helical transmembrane segment spans residues Ser147–Ile164. Arg161 contributes to the substrate binding site. The Lumenal segment spans residues Leu165–Pro169. His167 (nucleophile) is an active-site residue. A helical transmembrane segment spans residues His170–Met186. At Thr187 to Ser197 the chain is on the cytoplasmic side. The helical transmembrane segment at Phe198–Phe218 threads the bilayer. Over Thr219–Asp254 the chain is Lumenal. Residues Ser255–Val273 form a helical membrane-spanning segment. Residues Arg274 to Lys283 are Cytoplasmic-facing. A helical membrane pass occupies residues Ile284–Pro304. Residues Gln305–Ser307 lie on the Lumenal side of the membrane. A helical transmembrane segment spans residues Leu308–Val328. Residues Pro329–Ser346 are Cytoplasmic-facing.

This sequence belongs to the glucose-6-phosphatase family. As to expression, ubiquitously expressed. Highly expressed in skeletal muscle, at intermediate levels in heart, brain, placenta, kidney, colon, thymus, spleen and pancreas. Also detected in testis, prostate, ovary, liver, lung, small intestine and peripheral blood lymphocytes.

The protein resides in the endoplasmic reticulum membrane. It catalyses the reaction D-glucose 6-phosphate + H2O = D-glucose + phosphate. It functions in the pathway carbohydrate biosynthesis; gluconeogenesis. Its activity is regulated as follows. Inhibited by vanadate. In terms of biological role, hydrolyzes glucose-6-phosphate to glucose in the endoplasmic reticulum. May form with the glucose-6-phosphate transporter (SLC37A4/G6PT) a ubiquitously expressed complex responsible for glucose production through glycogenolysis and gluconeogenesis. Probably required for normal neutrophil function. The sequence is that of Glucose-6-phosphatase 3 (G6PC3) from Homo sapiens (Human).